The sequence spans 972 residues: UvrABC system protein A (972 aa).

ATP is bound at residue 32 to 39; the sequence is GLSGSGKS. A C4-type; atypical zinc finger spans residues 257–285; sequence CPNGHALAVDDLEPRSFSFNSPYGACPEC. 2 ABC transporter domains span residues 315 to 601 and 621 to 950; these read WSNG…KDSI and VDPR…KFLA. 654-661 is a binding site for ATP; that stretch reads GVSGSGKS. A C4-type zinc finger spans residues 753-779; the sequence is CEACTGDGTIKIEMNFLPDVYVPCEVC.

This sequence belongs to the ABC transporter superfamily. UvrA family. In terms of assembly, forms a heterotetramer with UvrB during the search for lesions.

The protein localises to the cytoplasm. In terms of biological role, the UvrABC repair system catalyzes the recognition and processing of DNA lesions. UvrA is an ATPase and a DNA-binding protein. A damage recognition complex composed of 2 UvrA and 2 UvrB subunits scans DNA for abnormalities. When the presence of a lesion has been verified by UvrB, the UvrA molecules dissociate. The chain is UvrABC system protein A from Mycobacterium bovis (strain ATCC BAA-935 / AF2122/97).